A 493-amino-acid chain; its full sequence is Leucine-rich repeat-containing protein 14 (493 aa).

An LRR 1; degenerate repeat occupies 111–146 (KHALRVLDMTGLLDDGVEQDPETMSMWDCTAAVART). An LRR 2; degenerate repeat occupies 194 to 218 (RLCCRDLRAEDLPMRNTVALLQLLD). The LRR 3; degenerate repeat unit spans residues 219-246 (AGCLRRIDLRFNNLGLRGLSVIIPHVAR). One copy of the LRR 4; degenerate repeat lies at 247–282 (FQHLASLRLHYVHGDSRQPSVDGEDNFRYFLAQMGR). LRR repeat units follow at residues 283 to 307 (FMCLRELSMGSSLLSGRLDQLLSTL), 308 to 339 (QRPLESLELAFCALLPEDLRFLAQSSHAAHLK), 340 to 360 (KLDLSGNDLSGNQLTPFQGLL), 364 to 391 (ATTLLHLELTECQLADAQLLATLPTLTR), and 392 to 416 (CASLRYLGLYGNPLSMAGLKELLRD).

This sequence belongs to the PRAME family. LRRC14 subfamily. As to quaternary structure, interacts with IKBKB; disrupts IKBKB-IKBKG interaction preventing I-kappa-B-kinase (IKK) core complex formation and leading to a decrease of IKBKB phosphorylation and NF-kappaB activation. Interacts with CHUK.

Its subcellular location is the cytoplasm. Functionally, negatively regulates Toll-like receptor-mediated NF-kappa-B signaling by disrupting IKK core complex formation through interaction with IKBKB. The protein is Leucine-rich repeat-containing protein 14 of Mus musculus (Mouse).